A 491-amino-acid chain; its full sequence is Protein nucleotidyltransferase YdiU (491 aa).

Gly94, Gly96, Arg97, Lys117, Asp129, Gly130, Arg180, and Arg187 together coordinate ATP. The active-site Proton acceptor is Asp256. Mg(2+) contacts are provided by Asn257 and Asp266. ATP is bound at residue Asp266.

The protein belongs to the SELO family. Mg(2+) is required as a cofactor. The cofactor is Mn(2+).

The catalysed reaction is L-seryl-[protein] + ATP = 3-O-(5'-adenylyl)-L-seryl-[protein] + diphosphate. It carries out the reaction L-threonyl-[protein] + ATP = 3-O-(5'-adenylyl)-L-threonyl-[protein] + diphosphate. The enzyme catalyses L-tyrosyl-[protein] + ATP = O-(5'-adenylyl)-L-tyrosyl-[protein] + diphosphate. It catalyses the reaction L-histidyl-[protein] + UTP = N(tele)-(5'-uridylyl)-L-histidyl-[protein] + diphosphate. The catalysed reaction is L-seryl-[protein] + UTP = O-(5'-uridylyl)-L-seryl-[protein] + diphosphate. It carries out the reaction L-tyrosyl-[protein] + UTP = O-(5'-uridylyl)-L-tyrosyl-[protein] + diphosphate. Functionally, nucleotidyltransferase involved in the post-translational modification of proteins. It can catalyze the addition of adenosine monophosphate (AMP) or uridine monophosphate (UMP) to a protein, resulting in modifications known as AMPylation and UMPylation. This chain is Protein nucleotidyltransferase YdiU, found in Clostridium botulinum (strain Alaska E43 / Type E3).